The following is a 184-amino-acid chain: ATP synthase subunit b, chloroplastic (184 aa).

The chain crosses the membrane as a helical span at residues 29–49 (TNLINLGVVLGLLVYFGKGVL).

Belongs to the ATPase B chain family. In terms of assembly, F-type ATPases have 2 components, F(1) - the catalytic core - and F(0) - the membrane proton channel. F(1) has five subunits: alpha(3), beta(3), gamma(1), delta(1), epsilon(1). F(0) has four main subunits: a(1), b(1), b'(1) and c(10-14). The alpha and beta chains form an alternating ring which encloses part of the gamma chain. F(1) is attached to F(0) by a central stalk formed by the gamma and epsilon chains, while a peripheral stalk is formed by the delta, b and b' chains.

Its subcellular location is the plastid. The protein localises to the chloroplast thylakoid membrane. F(1)F(0) ATP synthase produces ATP from ADP in the presence of a proton or sodium gradient. F-type ATPases consist of two structural domains, F(1) containing the extramembraneous catalytic core and F(0) containing the membrane proton channel, linked together by a central stalk and a peripheral stalk. During catalysis, ATP synthesis in the catalytic domain of F(1) is coupled via a rotary mechanism of the central stalk subunits to proton translocation. Functionally, component of the F(0) channel, it forms part of the peripheral stalk, linking F(1) to F(0). The chain is ATP synthase subunit b, chloroplastic from Anthoceros angustus (Hornwort).